The chain runs to 492 residues: DEAD-box ATP-dependent RNA helicase RhpA (492 aa).

The short motif at 20-48 (PSFNDLGLKESVLKSVYEAGFTSPSPIQE) is the Q motif element. Residues 51–220 (IPAVLQGRDV…DKILENPIKI (170 aa)) enclose the Helicase ATP-binding domain. 64–71 (AQTGTGKT) contributes to the ATP binding site. A DEAD box motif is present at residues 168 to 171 (DESD). Residues 231–393 (DITQRFYVIN…EIPTINENQI (163 aa)) form the Helicase C-terminal domain. The interval 445–492 (AIQNPKEKTPKPSNKKTPQHERARSFKKGQHRDRHPKTNHYSKKPKRR) is disordered. The span at 469–492 (SFKKGQHRDRHPKTNHYSKKPKRR) shows a compositional bias: basic residues.

Belongs to the DEAD box helicase family. As to quaternary structure, homodimer. Interacts with RNase J (rnj), might be a member of a minimal RNA degradosome complex.

It localises to the cytoplasm. The enzyme catalyses ATP + H2O = ADP + phosphate + H(+). Functionally, DEAD-box RNA helicase probably involved in RNA degradation. Unwinds dsRNA in both 5'- and 3'-directions. This chain is DEAD-box ATP-dependent RNA helicase RhpA (rhpA), found in Helicobacter pylori (strain ATCC 700392 / 26695) (Campylobacter pylori).